Here is a 199-residue protein sequence, read N- to C-terminus: RNA-free ribonuclease P (199 aa).

The protein belongs to the HARP family.

The enzyme catalyses Endonucleolytic cleavage of RNA, removing 5'-extranucleotides from tRNA precursor.. Its function is as follows. RNA-free RNase P that catalyzes the removal of the 5'-leader sequence from pre-tRNA to produce the mature 5'-terminus. The protein is RNA-free ribonuclease P of Pyrococcus furiosus (strain ATCC 43587 / DSM 3638 / JCM 8422 / Vc1).